A 604-amino-acid polypeptide reads, in one-letter code: uncharacterized protein (604 aa).

The segment at 239-259 is disordered; sequence ELNSPQELNDPQELNNSQDLN.

This is an uncharacterized protein from Escherichia coli (strain K12).